The chain runs to 460 residues: Nucleosome assembly protein 1-like 2 (460 aa).

2 stretches are compositionally biased toward basic and acidic residues: residues 1–11 and 27–36; these read MAESENRKELS and LGEHLERGED. Disordered stretches follow at residues 1–88 and 214–238; these read MAES…ADRP and EEEEEEEEDDIEATGEENKEEEDPK. A compositionally biased stretch (acidic residues) spans 214–236; that stretch reads EEEEEEEEDDIEATGEENKEEED. A Nuclear localization signal motif is present at residues 346-352; sequence IKKKQKH.

This sequence belongs to the nucleosome assembly protein (NAP) family.

Its subcellular location is the nucleus. Acidic protein which may be involved in interactions with other proteins or DNA. The sequence is that of Nucleosome assembly protein 1-like 2 (NAP1L2) from Homo sapiens (Human).